Consider the following 336-residue polypeptide: Phosphoribosylformylglycinamidine cyclo-ligase (336 aa).

This sequence belongs to the AIR synthase family.

It is found in the cytoplasm. It carries out the reaction 2-formamido-N(1)-(5-O-phospho-beta-D-ribosyl)acetamidine + ATP = 5-amino-1-(5-phospho-beta-D-ribosyl)imidazole + ADP + phosphate + H(+). The protein operates within purine metabolism; IMP biosynthesis via de novo pathway; 5-amino-1-(5-phospho-D-ribosyl)imidazole from N(2)-formyl-N(1)-(5-phospho-D-ribosyl)glycinamide: step 2/2. The chain is Phosphoribosylformylglycinamidine cyclo-ligase from Thermoanaerobacter pseudethanolicus (strain ATCC 33223 / 39E) (Clostridium thermohydrosulfuricum).